The chain runs to 253 residues: Kojic acid related protein 1 (253 aa).

Helical transmembrane passes span 23-43 (PIKFLWSGALFLGVLSIFILI), 53-73 (IFYPPVSVFVHVGLFIVYIVS), and 117-137 (ALFGFTIIIIVLYFVEIIVSV). Positions 174–253 (FPMMSPALPS…PPPPKKAAKV (80 aa)) are disordered. Polar residues-rich tracts occupy residues 184–200 (GGTTQMMPTMSSRSPEF) and 226–240 (QQESSETLAPGNQPQ). Positions 242 to 253 (YFPPPPKKAAKV) are enriched in pro residues.

The protein localises to the membrane. Involved in mycelium growth and repression of conidia formation by affecting the expression of brlA and abaA. Acts as a negative regulation factor for kojic acid production through affecting the expression of kojA, kojR and kojT. This chain is Kojic acid related protein 1, found in Aspergillus oryzae (strain ATCC 42149 / RIB 40) (Yellow koji mold).